Consider the following 236-residue polypeptide: Purine nucleoside phosphorylase DeoD-type 2 (236 aa).

His-5 contacts a purine D-ribonucleoside. Phosphate contacts are provided by residues Gly-21, Arg-25, Arg-44, and 88-91 (RVGS). A purine D-ribonucleoside-binding positions include 180–182 (DME) and 204–205 (SD). The Proton donor role is filled by Asp-205.

This sequence belongs to the PNP/UDP phosphorylase family. Homohexamer; trimer of homodimers.

It carries out the reaction a purine D-ribonucleoside + phosphate = a purine nucleobase + alpha-D-ribose 1-phosphate. The enzyme catalyses a purine 2'-deoxy-D-ribonucleoside + phosphate = a purine nucleobase + 2-deoxy-alpha-D-ribose 1-phosphate. Functionally, catalyzes the reversible phosphorolytic breakdown of the N-glycosidic bond in the beta-(deoxy)ribonucleoside molecules, with the formation of the corresponding free purine bases and pentose-1-phosphate. The polypeptide is Purine nucleoside phosphorylase DeoD-type 2 (Vibrio parahaemolyticus serotype O3:K6 (strain RIMD 2210633)).